Here is a 407-residue protein sequence, read N- to C-terminus: Argininosuccinate synthase (407 aa).

ATP contacts are provided by residues 16–24 (AYSGGLDTS) and alanine 44. L-citrulline-binding residues include tyrosine 96 and serine 101. Glycine 126 lines the ATP pocket. Positions 128, 132, and 133 each coordinate L-aspartate. An L-citrulline-binding site is contributed by asparagine 132. Positions 136, 185, 194, 270, and 282 each coordinate L-citrulline.

It belongs to the argininosuccinate synthase family. Type 1 subfamily. As to quaternary structure, homotetramer.

Its subcellular location is the cytoplasm. It catalyses the reaction L-citrulline + L-aspartate + ATP = 2-(N(omega)-L-arginino)succinate + AMP + diphosphate + H(+). It functions in the pathway amino-acid biosynthesis; L-arginine biosynthesis; L-arginine from L-ornithine and carbamoyl phosphate: step 2/3. In Shewanella sp. (strain W3-18-1), this protein is Argininosuccinate synthase.